The primary structure comprises 223 residues: Peptidyl-tRNA hydrolase (223 aa).

Y16 lines the tRNA pocket. Residue H21 is the Proton acceptor of the active site. Positions 67, 69, and 113 each coordinate tRNA.

Belongs to the PTH family. Monomer.

The protein localises to the cytoplasm. The enzyme catalyses an N-acyl-L-alpha-aminoacyl-tRNA + H2O = an N-acyl-L-amino acid + a tRNA + H(+). Hydrolyzes ribosome-free peptidyl-tRNAs (with 1 or more amino acids incorporated), which drop off the ribosome during protein synthesis, or as a result of ribosome stalling. Functionally, catalyzes the release of premature peptidyl moieties from peptidyl-tRNA molecules trapped in stalled 50S ribosomal subunits, and thus maintains levels of free tRNAs and 50S ribosomes. The sequence is that of Peptidyl-tRNA hydrolase from Helicobacter hepaticus (strain ATCC 51449 / 3B1).